A 430-amino-acid polypeptide reads, in one-letter code: Adenylosuccinate synthetase (430 aa).

Residues 12-18 and 40-42 each bind GTP; these read GDEGKGK and GHT. D13 functions as the Proton acceptor in the catalytic mechanism. Residues D13 and G40 each contribute to the Mg(2+) site. Residues 13–16, 38–41, T130, R144, Q224, T239, and R303 contribute to the IMP site; these read DEGK and NAGH. Residue H41 is the Proton donor of the active site. Residue 299-305 coordinates substrate; the sequence is VNTGRKR. GTP is bound by residues R305, 331-333, and 413-415; these read KLD and STS.

The protein belongs to the adenylosuccinate synthetase family. Homodimer. Mg(2+) serves as cofactor.

It localises to the cytoplasm. It carries out the reaction IMP + L-aspartate + GTP = N(6)-(1,2-dicarboxyethyl)-AMP + GDP + phosphate + 2 H(+). It functions in the pathway purine metabolism; AMP biosynthesis via de novo pathway; AMP from IMP: step 1/2. Plays an important role in the de novo pathway of purine nucleotide biosynthesis. Catalyzes the first committed step in the biosynthesis of AMP from IMP. This chain is Adenylosuccinate synthetase, found in Nitrobacter winogradskyi (strain ATCC 25391 / DSM 10237 / CIP 104748 / NCIMB 11846 / Nb-255).